The primary structure comprises 534 residues: MAIKLIALVITLCVASWDVAQGRSLRFSTTPLNRYSFPPHFDFGVASSAYQYEGAVEEGGRSLSIWDNFTHAFPERTNMDNGDVAVDFYHRYKEDIKLIKEMNMDSFRFSLSWSRILPSGKLSDGVNKEGVQFYKNLIDELIENGIKPFVTIYHWDIPQALDDEYGSFLSPRIIDDFRNYARFCFQEFGDKVSMWTTFNEPYVYSVSGYDAGNKAMGRCSKWVNSLCIAGDSGTEPYLVSHHLLLAHAAAVEEFRKCDKISQDSKIGIVLSPYWFEPYDSASNADKEAVERALAFNIGWHLSPLVFGDYPETIKISAGNRLPSFTKEQSMMVKNSFDFIGVNYYTARFVAHDLNVDISRPRFMTDQHLQYKLTNRTGDTISLESDGTKILWSYPEGLRKILNYIKNKYNNPTIYITENGFDDYENGTVTREEILEDTKRIEYHQKHLQELQKAITEDGCDVKGYFTWSLLDNFEWEHGYAVRFGLYYVDYKNGLQRHAKHSAMWFKHFLERSGKPMPMDLFKSVKRWWSTLQMI.

A signal peptide spans 1–22; sequence MAIKLIALVITLCVASWDVAQG. Q51 lines the a beta-D-glucoside pocket. N68 is a glycosylation site (N-linked (GlcNAc...) asparagine). Residues H154 and 199–200 contribute to the a beta-D-glucoside site; that span reads NE. E200 acts as the Proton donor in catalysis. C219 and C227 are oxidised to a cystine. An a beta-D-glucoside-binding site is contributed by Y344. Residue N374 is glycosylated (N-linked (GlcNAc...) asparagine). E417 contacts a beta-D-glucoside. The active-site Nucleophile is E417. An N-linked (GlcNAc...) asparagine glycan is attached at N425. A beta-D-glucoside is bound by residues W467, 474-475, and F483; that span reads EW.

The protein belongs to the glycosyl hydrolase 1 family.

It catalyses the reaction Hydrolysis of terminal, non-reducing beta-D-glucosyl residues with release of beta-D-glucose.. The polypeptide is Beta-glucosidase 31 (Arabidopsis thaliana (Mouse-ear cress)).